The chain runs to 103 residues: MYAVFQSGGKQHRVSEGQTLRLEKLDVETGATVEFDKVLLVANGEDIKVGAPLVEGGKVVAEVVQHGRGDKVKIVKFRRRKHSRKQQGHRQWFTEVKITGINA.

It belongs to the bacterial ribosomal protein bL21 family. Part of the 50S ribosomal subunit. Contacts protein L20.

Its function is as follows. This protein binds to 23S rRNA in the presence of protein L20. The sequence is that of Large ribosomal subunit protein bL21 from Vibrio cholerae serotype O1 (strain ATCC 39541 / Classical Ogawa 395 / O395).